A 944-amino-acid chain; its full sequence is Protocadherin gamma-C5 (944 aa).

The N-terminal stretch at 1–29 (MGPKTLPQLAGKWQVLCMLSLCCWGWVSG) is a signal peptide. Cadherin domains follow at residues 30 to 133 (QLRY…SPSF), 134 to 242 (ATPE…APTF), 243 to 350 (QSSV…APEV), 351 to 454 (LLAS…APRF), 455 to 564 (NQQL…APAV), and 571 to 677 (WEHS…MPKS). At 30 to 693 (QLRYSVVEES…PPERSDLTLY (664 aa)) the chain is on the extracellular side. 3 N-linked (GlcNAc...) asparagine glycosylation sites follow: N265, N443, and N547. A helical membrane pass occupies residues 694–714 (LIVALATVSLLSLVTFTFLSA). The Cytoplasmic segment spans residues 715-944 (KCLQGNADGD…KKKSGKKEKK (230 aa)). Disordered regions lie at residues 722–747 (DGDGGGGQCCRRQDSPSPDFYKQSSP), 812–853 (SNTL…WPNN), and 914–944 (ATLTNAAGKRDGKAPAGGNGNKKKSGKKEKK). The span at 820-853 (QQAPPNTDWRFSQAQRPGTSGSQNGDDTGTWPNN) shows a compositional bias: polar residues. Over residues 934–944 (NKKKSGKKEKK) the composition is skewed to basic residues.

The protein localises to the cell membrane. In terms of biological role, potential calcium-dependent cell-adhesion protein. May be involved in the establishment and maintenance of specific neuronal connections in the brain. In Pan troglodytes (Chimpanzee), this protein is Protocadherin gamma-C5 (PCDHGC5).